The chain runs to 284 residues: Cell division protein FtsQ (284 aa).

At 1 to 31 (MAQLPASMRRKRAAITSIHDKPPTRKQKLAN) the chain is on the cytoplasmic side. The chain crosses the membrane as a helical span at residues 32–52 (AGGWVLLVIAFVVLAVGIYGL). The Periplasmic segment spans residues 53–284 (YKVITDATVA…SIAGGTKAKP (232 aa)). One can recognise a POTRA domain in the interval 59-128 (ATVAKLEVVG…NGIRVRVMPR (70 aa)).

The protein belongs to the FtsQ/DivIB family. FtsQ subfamily. In terms of assembly, part of a complex composed of FtsB, FtsL and FtsQ.

The protein resides in the cell inner membrane. Its function is as follows. Essential cell division protein. May link together the upstream cell division proteins, which are predominantly cytoplasmic, with the downstream cell division proteins, which are predominantly periplasmic. May control correct divisome assembly. This chain is Cell division protein FtsQ, found in Acinetobacter oleivorans (strain JCM 16667 / KCTC 23045 / DR1).